A 133-amino-acid polypeptide reads, in one-letter code: Ribonuclease VapC29 (133 aa).

Positions 3 to 122 (VLLDANVLIA…TLDSGLAHLH (120 aa)) constitute a PINc domain. Positions 6 and 97 each coordinate Mg(2+).

This sequence belongs to the PINc/VapC protein family. It depends on Mg(2+) as a cofactor.

In terms of biological role, toxic component of a type II toxin-antitoxin (TA) system. Its cognate antitoxin is VapB29. Has ribonuclease activity. This is Ribonuclease VapC29 from Mycobacterium tuberculosis (strain CDC 1551 / Oshkosh).